Consider the following 695-residue polypeptide: Phosphate acetyltransferase (695 aa).

A phosphate acetyltransferase region spans residues 372-695 (AFRYRLVKRA…LTAVQAASQR (324 aa)).

In the N-terminal section; belongs to the CobB/CobQ family. It in the C-terminal section; belongs to the phosphate acetyltransferase and butyryltransferase family. Homohexamer.

It is found in the cytoplasm. The catalysed reaction is acetyl-CoA + phosphate = acetyl phosphate + CoA. It functions in the pathway metabolic intermediate biosynthesis; acetyl-CoA biosynthesis; acetyl-CoA from acetate: step 2/2. In terms of biological role, involved in acetate metabolism. The polypeptide is Phosphate acetyltransferase (pta) (Nitrosomonas europaea (strain ATCC 19718 / CIP 103999 / KCTC 2705 / NBRC 14298)).